We begin with the raw amino-acid sequence, 366 residues long: Outer membrane porin C 2 (366 aa).

The first 21 residues, M1–A21, serve as a signal peptide directing secretion.

Belongs to the Gram-negative porin family. Homotrimer. Forms mixed heterotrimers with OmpF and with PhoE; other mixed heterotrimers are also probable.

Its subcellular location is the cell outer membrane. In terms of biological role, forms pores that allow passive diffusion of small molecules across the outer membrane. Plays a role in virulence. The chain is Outer membrane porin C 2 from Shigella flexneri serotype 5a (strain M90T).